The primary structure comprises 292 residues: MSENDSSESDIEMDPEEEKVYRRQVEESDGFDVDYFRYAGIKPCPLKDENAYTYDIELFGRLGLHCYNLLHEGTNLKLMCIPKYNTNNIGVSSGDYYYITLEAIDTYNNSPCTFQTYVSEWYQTSEHGYLVVETYIARLKGPTGPHNTCIGRGWIWGWEEEAIDVYYKGKLPKWLTKDLLAAAKDEYYVVQESDILENEWLHLYAEIALYSNWKWHATRKSCEESPHLKLKANNAIFYMGFKGSGDHHPSGKHVEYQTIVRKAMDGKPGHIRLEVDSWQAIPSDLIGEDEPP.

Acidic residues predominate over residues 1-17 (MSENDSSESDIEMDPEE). The segment at 1–24 (MSENDSSESDIEMDPEEEKVYRRQ) is disordered.

It belongs to the UPF0725 (EMB2204) family.

In Arabidopsis thaliana (Mouse-ear cress), this protein is UPF0725 protein At4g28920.